The sequence spans 125 residues: Small ribosomal subunit protein uS13 (125 aa).

The segment covering 94-116 (GLPVRGQRTRTNARTRKGPRKAV) has biased composition (basic residues). Residues 94–125 (GLPVRGQRTRTNARTRKGPRKAVRASSAKAGR) are disordered.

The protein belongs to the universal ribosomal protein uS13 family. In terms of assembly, part of the 30S ribosomal subunit. Forms a loose heterodimer with protein S19. Forms two bridges to the 50S subunit in the 70S ribosome.

Its function is as follows. Located at the top of the head of the 30S subunit, it contacts several helices of the 16S rRNA. In the 70S ribosome it contacts the 23S rRNA (bridge B1a) and protein L5 of the 50S subunit (bridge B1b), connecting the 2 subunits; these bridges are implicated in subunit movement. Contacts the tRNAs in the A and P-sites. This Nitrosospira multiformis (strain ATCC 25196 / NCIMB 11849 / C 71) protein is Small ribosomal subunit protein uS13.